A 331-amino-acid polypeptide reads, in one-letter code: Aromatic 2-oxoacid reductase (331 aa).

NAD(+) is bound by residues 154-155 (RI), Asp-175, 205-206 (AP), Asn-211, 232-234 (AAR), and Asp-258. Arg-234 is a catalytic residue. Residue Glu-263 is part of the active site. The active-site Proton donor is His-295.

Belongs to the D-isomer specific 2-hydroxyacid dehydrogenase family.

It carries out the reaction (R)-3-phenyllactate + NAD(+) = 3-phenylpyruvate + NADH + H(+). The catalysed reaction is (2R)-2-hydroxy-3-(4-hydroxyphenyl)propanoate + NAD(+) = 3-(4-hydroxyphenyl)pyruvate + NADH + H(+). The enzyme catalyses 3-(indol-3-yl)lactate + NAD(+) = indole-3-pyruvate + NADH + H(+). It participates in amino-acid degradation. Essential for the reductive metabolism of L-phenylalanine, L-tyrosine and L-tryptophan. Catalyzes the conversion of phenylpyruvic acid to phenyllactic acid, 4-hydroxy-phenylpyruvic acid to 4-hydroxy-phenyllactic acid, and indolepyruvic acid to indolelactic acid. The protein is Aromatic 2-oxoacid reductase of Clostridium sporogenes (strain ATCC 7955 / DSM 767 / NBRC 16411 / NCIMB 8053 / NCTC 8594 / PA 3679).